The sequence spans 286 residues: Homoserine kinase (286 aa).

78–88 (PLARGLGSSSS) contacts ATP.

Belongs to the GHMP kinase family. Homoserine kinase subfamily.

It is found in the cytoplasm. The enzyme catalyses L-homoserine + ATP = O-phospho-L-homoserine + ADP + H(+). It participates in amino-acid biosynthesis; L-threonine biosynthesis; L-threonine from L-aspartate: step 4/5. Its function is as follows. Catalyzes the ATP-dependent phosphorylation of L-homoserine to L-homoserine phosphate. This Streptococcus thermophilus (strain CNRZ 1066) protein is Homoserine kinase.